A 440-amino-acid polypeptide reads, in one-letter code: Exosome complex component RRP45 (440 aa).

Residue Ser-65 is modified to Phosphoserine. Lys-297 bears the N6-acetyllysine; alternate mark. Residue Lys-297 forms a Glycyl lysine isopeptide (Lys-Gly) (interchain with G-Cter in SUMO1); alternate linkage. Lys-297 participates in a covalent cross-link: Glycyl lysine isopeptide (Lys-Gly) (interchain with G-Cter in SUMO2); alternate. Ser-306 and Ser-346 each carry phosphoserine. Residues 341-362 form a disordered region; the sequence is EGIENSWGHLEDSEKEDEDEGG. Over residues 353 to 362 the composition is skewed to acidic residues; the sequence is SEKEDEDEGG. Ser-393 and Ser-395 each carry phosphoserine. Residues 404 to 440 form a disordered region; it reads EPDKNPKKIRTQTISATQVKAPSKKPVKKRKKKRAAN. The span at 425 to 440 shows a compositional bias: basic residues; that stretch reads PSKKPVKKRKKKRAAN.

It belongs to the RNase PH family. In terms of assembly, component of the RNA exosome core complex (Exo-9), composed of EXOSC1, EXOSC2, EXOSC3, EXOSC4, EXOSC5, EXOSC6, EXOSC7, EXOSC8 and EXOSC9; within the complex interacts with EXOSC3, EXOSC4, EXOSC5 and DIS3. The catalytically inactive RNA exosome core complex (Exo-9) associates with the catalytic subunit EXOSC10/RRP6. Exo-9 may associate with DIS3 to form the nucleolar exosome complex, or DIS3L to form the cytoplasmic exosome complex. Exo-9 is formed by a hexameric base ring consisting of the heterodimers EXOSC4-EXOSC9, EXOSC5-EXOSC8 and EXOSC6-EXOSC7, and a cap ring consisting of EXOSC1, EXOSC2 and EXOSC3. The RNA exosome complex associates with cofactors C1D/RRP47, MPHOSPH6/MPP6 and MTREX/MTR4. Interacts (via C-terminus region) with SETX (via N-terminus domain); the interaction enhances SETX sumoylation. Interacts with DIS3; the interaction is direct.

Its subcellular location is the cytoplasm. The protein resides in the nucleus. It is found in the nucleolus. It localises to the nucleoplasm. Its function is as follows. Non-catalytic component of the RNA exosome complex which has 3'-&gt;5' exoribonuclease activity and participates in a multitude of cellular RNA processing and degradation events. In the nucleus, the RNA exosome complex is involved in proper maturation of stable RNA species such as rRNA, snRNA and snoRNA, in the elimination of RNA processing by-products and non-coding 'pervasive' transcripts, such as antisense RNA species and promoter-upstream transcripts (PROMPTs), and of mRNAs with processing defects, thereby limiting or excluding their export to the cytoplasm. The RNA exosome may be involved in Ig class switch recombination (CSR) and/or Ig variable region somatic hypermutation (SHM) by targeting AICDA deamination activity to transcribed dsDNA substrates. In the cytoplasm, the RNA exosome complex is involved in general mRNA turnover and specifically degrades inherently unstable mRNAs containing AU-rich elements (AREs) within their 3' untranslated regions, and in RNA surveillance pathways, preventing translation of aberrant mRNAs. It seems to be involved in degradation of histone mRNA. The catalytic inactive RNA exosome core complex of 9 subunits (Exo-9) is proposed to play a pivotal role in the binding and presentation of RNA for ribonucleolysis, and to serve as a scaffold for the association with catalytic subunits and accessory proteins or complexes. EXOSC9 binds to ARE-containing RNAs. In Bos taurus (Bovine), this protein is Exosome complex component RRP45 (EXOSC9).